Here is a 228-residue protein sequence, read N- to C-terminus: MKKAVVLLSGGLDSTTCLALAKSQGFACYALSFSYGQRHSAELCAATRIAKHMGAADHKIVTLDIALFGGSALTDASIEVPEFKESPEIPVTYVPARNTIFLAMALGYAESIGARDIFIGASSVDYSHYPDCRPEFIESFQSLANLATKAGIEGDRFTINAPLQYLSKVQTIQLGTELGVDYGLTVSCYQANEAGEACGQCDSCTFRKRGFKSAGVDDPTRYQKCVHI.

Position 8-18 (8-18) interacts with ATP; sequence LSGGLDSTTCL. Residues Cys188, Cys198, Cys201, and Cys204 each contribute to the Zn(2+) site.

The protein belongs to the QueC family. The cofactor is Zn(2+).

The catalysed reaction is 7-carboxy-7-deazaguanine + NH4(+) + ATP = 7-cyano-7-deazaguanine + ADP + phosphate + H2O + H(+). It participates in purine metabolism; 7-cyano-7-deazaguanine biosynthesis. In terms of biological role, catalyzes the ATP-dependent conversion of 7-carboxy-7-deazaguanine (CDG) to 7-cyano-7-deazaguanine (preQ(0)). The sequence is that of 7-cyano-7-deazaguanine synthase from Legionella pneumophila subsp. pneumophila (strain Philadelphia 1 / ATCC 33152 / DSM 7513).